We begin with the raw amino-acid sequence, 490 residues long: UDP-glycosyltransferase 84A1 (490 aa).

His30 functions as the Proton acceptor in the catalytic mechanism. His30 contacts an anthocyanidin. 6 residues coordinate UDP-alpha-D-glucose: Gln358, His373, Trp376, Asn377, Ser378, and Glu381. An anthocyanidin is bound at residue Gly396. 2 residues coordinate UDP-alpha-D-glucose: Asp397 and Gln398.

Belongs to the UDP-glycosyltransferase family. In terms of tissue distribution, expressed in roots, flowers and siliques.

It catalyses the reaction (E)-4-coumarate + UDP-alpha-D-glucose = 4-O-(beta-D-glucosyl)-trans-4-coumarate + UDP + H(+). It carries out the reaction (E)-ferulate + UDP-alpha-D-glucose = 1-O-[(E)-feruloyl]-beta-D-glucose + UDP. The enzyme catalyses (E)-caffeate + UDP-alpha-D-glucose = 1-O-[(E)-caffeoyl]-beta-D-glucose + UDP. The catalysed reaction is (E)-sinapate + UDP-alpha-D-glucose = 1-O-(trans-sinapoyl)-beta-D-glucose + UDP. It catalyses the reaction (E)-cinnamate + UDP-alpha-D-glucose = 1-O-(trans-cinnamoyl)-beta-D-glucose + UDP. Functionally, UDP-glucosyltransferase that forms glucose esters with phenylpropanoids. Glucosylates 4-coumarate, ferulate, caffeate, sinapate and cinnamate. Can glucosylate the phytotoxic xenobiotic compound 2,4,5-trichlorophenol (TCP). This chain is UDP-glycosyltransferase 84A1, found in Arabidopsis thaliana (Mouse-ear cress).